The primary structure comprises 342 residues: Dihydroorotase (342 aa).

Residues histidine 13 and histidine 15 each coordinate Zn(2+). Residues 15-17 (HLR) and asparagine 41 each bind substrate. 3 residues coordinate Zn(2+): lysine 99, histidine 136, and histidine 174. N6-carboxylysine is present on lysine 99. Histidine 136 contacts substrate. Leucine 218 lines the substrate pocket. Residue aspartate 246 coordinates Zn(2+). The active site involves aspartate 246. Substrate contacts are provided by histidine 250 and alanine 262.

The protein belongs to the metallo-dependent hydrolases superfamily. DHOase family. Class II DHOase subfamily. Homodimer. It depends on Zn(2+) as a cofactor.

It carries out the reaction (S)-dihydroorotate + H2O = N-carbamoyl-L-aspartate + H(+). It functions in the pathway pyrimidine metabolism; UMP biosynthesis via de novo pathway; (S)-dihydroorotate from bicarbonate: step 3/3. Catalyzes the reversible cyclization of carbamoyl aspartate to dihydroorotate. In Synechocystis sp. (strain ATCC 27184 / PCC 6803 / Kazusa), this protein is Dihydroorotase.